The following is a 126-amino-acid chain: Small ribosomal subunit protein uS13 (126 aa).

Residues 95 to 126 (GLPVRGQRTRTNARTRKGPRKTVAGKKKAPRK) form a disordered region.

This sequence belongs to the universal ribosomal protein uS13 family. As to quaternary structure, part of the 30S ribosomal subunit. Forms a loose heterodimer with protein S19. Forms two bridges to the 50S subunit in the 70S ribosome.

In terms of biological role, located at the top of the head of the 30S subunit, it contacts several helices of the 16S rRNA. In the 70S ribosome it contacts the 23S rRNA (bridge B1a) and protein L5 of the 50S subunit (bridge B1b), connecting the 2 subunits; these bridges are implicated in subunit movement. Contacts the tRNAs in the A and P-sites. In Thermus thermophilus (strain ATCC BAA-163 / DSM 7039 / HB27), this protein is Small ribosomal subunit protein uS13 (rpsM).